The primary structure comprises 393 residues: HORMA domain-containing protein 1 (393 aa).

In terms of domain architecture, HORMA spans 24–226 (QQSLVLVKRL…TPFHTFKVKV (203 aa)). Residues 322–393 (SKTSELDVSE…RKFSEPKERI (72 aa)) are disordered. The segment covering 352-361 (KSKENRKRTQ) has biased composition (basic and acidic residues). Serine 375 bears the Phosphoserine mark. The short motif at 382–385 (KRRK) is the Nuclear localization signal element.

In terms of assembly, interacts with HORMAD2. Interacts with IHO1. Post-translationally, phosphorylated at Ser-376 in a SPO11-dependent manner.

It is found in the nucleus. It localises to the chromosome. In terms of biological role, plays a key role in meiotic progression. Regulates 3 different functions during meiosis: ensures that sufficient numbers of processed DNA double-strand breaks (DSBs) are available for successful homology search by increasing the steady-state numbers of single-stranded DSB ends. Promotes synaptonemal-complex formation independently of its role in homology search. Plays a key role in the male mid-pachytene checkpoint and the female meiotic prophase checkpoint: required for efficient build-up of ATR activity on unsynapsed chromosome regions, a process believed to form the basis of meiotic silencing of unsynapsed chromatin (MSUC) and meiotic prophase quality control in both sexes. The protein is HORMA domain-containing protein 1 (HORMAD1) of Bos taurus (Bovine).